We begin with the raw amino-acid sequence, 161 residues long: MSIVTKSIVNADAEARYLSPGELDRIKSFAASGERRLRIAQILTDNRERIVREAGQQLFQKRPDIVSPGGNAYGEEMTATCLRDLDYYLRLVTYGVVAGDATPIEEIGLVGVKEMYNSLGTPVAAVAEGVRSAKSVATGLLSGDDAAEAGSYFDYVIAALQ.

The residue at position 71 (Asn71) is an N4-methylasparagine. Cys81 is a binding site for (2R,3E)-phycocyanobilin.

The protein belongs to the phycobiliprotein family. Heterodimer of an alpha and a beta chain. Contains one covalently linked phycocyanobilin chromophore.

It localises to the plastid. The protein localises to the cyanelle thylakoid membrane. In terms of biological role, light-harvesting photosynthetic bile pigment-protein from the phycobiliprotein complex. Allophycocyanin has a maximum absorption at approximately 650 nanometers. The chain is Allophycocyanin alpha chain (apcA) from Cyanophora paradoxa.